A 648-amino-acid chain; its full sequence is Spastin (648 aa).

At 1–40 the chain is on the cytoplasmic side; the sequence is MASTVALLRDSSDDRENFDDGETDCVQVGRKRKLTVFFYP. Positions 41 to 61 form an intramembrane region, helical; that stretch reads LLLVFWLLRWVFYQFFLVLCF. Residues 62–648 lie on the Cytoplasmic side of the membrane; that stretch reads VCRGFVPRRH…WNREFGDITV (587 aa). An MIT domain is found at 99–174; sequence HKKAFDFISK…EMARDRLDFL (76 aa). Residues 188-346 are disordered; sequence PWHGGVAPAQ…SQRSLLSSRV (159 aa). Residues 247–266 are compositionally biased toward low complexity; the sequence is TGVTLRRQQQQQLGGVSTVS. 414-421 contacts ATP; the sequence is GPPGNGKT.

It belongs to the AAA ATPase family. Spastin subfamily. As to quaternary structure, homohexamer. The homohexamer is stabilized by ATP-binding. The homohexamer may adopt a ring conformation through which microtubules pass prior to being severed. Interacts with microtubules.

Its subcellular location is the membrane. It localises to the cytoplasm. It is found in the cytoskeleton. The protein resides in the microtubule organizing center. The protein localises to the centrosome. The catalysed reaction is n ATP + n H2O + a microtubule = n ADP + n phosphate + (n+1) alpha/beta tubulin heterodimers.. Functionally, ATP-dependent microtubule severing protein. Microtubule severing may promote reorganization of cellular microtubule arrays and the release of microtubules from the microtubule organizing center following nucleation. The polypeptide is Spastin (spas) (Ixodes scapularis (Black-legged tick)).